A 173-amino-acid chain; its full sequence is Large ribosomal subunit protein uL10 (173 aa).

Belongs to the universal ribosomal protein uL10 family. Part of the ribosomal stalk of the 50S ribosomal subunit. The N-terminus interacts with L11 and the large rRNA to form the base of the stalk. The C-terminus forms an elongated spine to which L12 dimers bind in a sequential fashion forming a multimeric L10(L12)X complex.

Forms part of the ribosomal stalk, playing a central role in the interaction of the ribosome with GTP-bound translation factors. The sequence is that of Large ribosomal subunit protein uL10 from Micrococcus luteus (strain ATCC 4698 / DSM 20030 / JCM 1464 / CCM 169 / CCUG 5858 / IAM 1056 / NBRC 3333 / NCIMB 9278 / NCTC 2665 / VKM Ac-2230) (Micrococcus lysodeikticus).